Here is a 1403-residue protein sequence, read N- to C-terminus: DNA-directed RNA polymerase subunit beta' (1403 aa).

4 residues coordinate Zn(2+): Cys-70, Cys-72, Cys-85, and Cys-88. Residues Asp-461, Asp-463, and Asp-465 each coordinate Mg(2+). Residues 687–708 (QQISQEETTGDRDGKRETRKQP) are disordered. Residues 695 to 706 (TGDRDGKRETRK) show a composition bias toward basic and acidic residues. Residues Cys-805, Cys-879, Cys-886, and Cys-889 each contribute to the Zn(2+) site. The disordered stretch occupies residues 1381-1403 (THGDTGPLGEPSRPVGTQTTGAA).

The protein belongs to the RNA polymerase beta' chain family. In terms of assembly, the RNAP catalytic core consists of 2 alpha, 1 beta, 1 beta' and 1 omega subunit. When a sigma factor is associated with the core the holoenzyme is formed, which can initiate transcription. It depends on Mg(2+) as a cofactor. The cofactor is Zn(2+).

The enzyme catalyses RNA(n) + a ribonucleoside 5'-triphosphate = RNA(n+1) + diphosphate. Functionally, DNA-dependent RNA polymerase catalyzes the transcription of DNA into RNA using the four ribonucleoside triphosphates as substrates. This is DNA-directed RNA polymerase subunit beta' from Myxococcus xanthus (strain DK1622).